Here is a 251-residue protein sequence, read N- to C-terminus: uncharacterized protein (251 aa).

Positions 1 to 15 are cleaved as a signal peptide; the sequence is MSAISSLVLIGWAMC. Asn225 and Asn242 each carry an N-linked (GlcNAc...) asparagine glycan.

This is an uncharacterized protein from Encephalitozoon cuniculi (strain GB-M1) (Microsporidian parasite).